Reading from the N-terminus, the 361-residue chain is Peptide chain release factor 1 (361 aa).

The residue at position 237 (glutamine 237) is an N5-methylglutamine. The segment covering 286 to 296 has biased composition (basic and acidic residues); sequence EKRRSAEESTR. A disordered region spans residues 286–305; it reads EKRRSAEESTRRNLVSSGDR.

Belongs to the prokaryotic/mitochondrial release factor family. In terms of processing, methylated by PrmC. Methylation increases the termination efficiency of RF1.

Its subcellular location is the cytoplasm. Peptide chain release factor 1 directs the termination of translation in response to the peptide chain termination codons UAG and UAA. The polypeptide is Peptide chain release factor 1 (Shewanella pealeana (strain ATCC 700345 / ANG-SQ1)).